A 779-amino-acid chain; its full sequence is Molybdenum cofactor sulfurase (779 aa).

The residue at position 247 (Lys247) is an N6-(pyridoxal phosphate)lysine. Cys409 is a catalytic residue. The 156-residue stretch at 624-779 (SQSLGLEGVR…LTCGDVIVVS (156 aa)) folds into the MOSC domain. Ser732 is subject to Phosphoserine.

The protein belongs to the class-V pyridoxal-phosphate-dependent aminotransferase family. MOCOS subfamily. Requires pyridoxal 5'-phosphate as cofactor.

It catalyses the reaction Mo-molybdopterin + L-cysteine + AH2 = thio-Mo-molybdopterin + L-alanine + A + H2O. It functions in the pathway cofactor biosynthesis; molybdopterin biosynthesis. Its function is as follows. Sulfurates the molybdenum cofactor. Sulfation of molybdenum is essential for xanthine dehydrogenase (XDH) and aldehyde oxidase (ADO) enzymes in which molybdenum cofactor is liganded by 1 oxygen and 1 sulfur atom in active form. The sequence is that of Molybdenum cofactor sulfurase from Drosophila mojavensis (Fruit fly).